A 443-amino-acid polypeptide reads, in one-letter code: Glutamate-rich protein 1 (443 aa).

Lys-12 bears the N6-acetyllysine mark. The interval 15-333 (QRLFPPVPSG…DASEEDDTIT (319 aa)) is disordered. Residues 42–54 (VTSEKVSQKHAEP) are compositionally biased toward basic and acidic residues. Over residues 87–97 (SCGSPENASSG) the composition is skewed to polar residues. 2 stretches are compositionally biased toward basic residues: residues 109 to 124 (PKRR…KKFK) and 159 to 176 (KNKK…RKKA). The segment covering 205–226 (ACEEDGVDTSEEDPTLAGEEDV) has biased composition (acidic residues). A phosphoserine mark is found at Ser-238 and Ser-254. Over residues 250-266 (GADASEEDPTPAGEEDV) the composition is skewed to acidic residues. Residue Thr-277 is modified to Phosphothreonine. The span at 281–296 (DLTRAGEEDGKDTREE) shows a compositional bias: basic and acidic residues. Residues 297–332 (DGADASEEDPTWAGEEEGADSGEEDGADASEEDDTI) are compositionally biased toward acidic residues.

The chain is Glutamate-rich protein 1 (ERICH1) from Homo sapiens (Human).